The chain runs to 156 residues: S-ribosylhomocysteine lyase (156 aa).

Fe cation-binding residues include H56, H60, and C123.

This sequence belongs to the LuxS family. As to quaternary structure, homodimer. Fe cation is required as a cofactor.

The catalysed reaction is S-(5-deoxy-D-ribos-5-yl)-L-homocysteine = (S)-4,5-dihydroxypentane-2,3-dione + L-homocysteine. Its function is as follows. Involved in the synthesis of autoinducer 2 (AI-2) which is secreted by bacteria and is used to communicate both the cell density and the metabolic potential of the environment. The regulation of gene expression in response to changes in cell density is called quorum sensing. Catalyzes the transformation of S-ribosylhomocysteine (RHC) to homocysteine (HC) and 4,5-dihydroxy-2,3-pentadione (DPD). The polypeptide is S-ribosylhomocysteine lyase (Staphylococcus epidermidis (strain ATCC 35984 / DSM 28319 / BCRC 17069 / CCUG 31568 / BM 3577 / RP62A)).